Here is a 467-residue protein sequence, read N- to C-terminus: Probable receptor-like protein kinase At3g17420 (467 aa).

Residues M1 to V35 form the signal peptide. Over L36 to A123 the chain is Extracellular. N50 is a glycosylation site (N-linked (GlcNAc...) asparagine). S70 carries the phosphoserine modification. Residue N79 is glycosylated (N-linked (GlcNAc...) asparagine). The disordered stretch occupies residues G102–P126. A helical transmembrane segment spans residues P124 to L144. At R145–I467 the chain is on the cytoplasmic side. One can recognise a Protein kinase domain in the interval F154–M433. Residues I160–V168 and K182 contribute to the ATP site. Y227 carries the phosphotyrosine modification. D280 acts as the Proton acceptor in catalysis. A phosphoserine mark is found at S284 and S313. Phosphothreonine is present on residues T314 and T319. Position 327 is a phosphotyrosine (Y327). The interval D413–I467 is disordered. Residues E447–I467 are compositionally biased toward basic and acidic residues.

Belongs to the protein kinase superfamily. Ser/Thr protein kinase family.

The protein localises to the cell membrane. The enzyme catalyses L-seryl-[protein] + ATP = O-phospho-L-seryl-[protein] + ADP + H(+). It carries out the reaction L-threonyl-[protein] + ATP = O-phospho-L-threonyl-[protein] + ADP + H(+). The protein is Probable receptor-like protein kinase At3g17420 of Arabidopsis thaliana (Mouse-ear cress).